We begin with the raw amino-acid sequence, 246 residues long: Ribonuclease 3 (246 aa).

The RNase III domain maps to 16-146; it reads ATELEAGIGY…LLAAVYLDGG (131 aa). Glu59 lines the Mg(2+) pocket. The active site involves Asp63. Mg(2+)-binding residues include Asn132 and Glu135. Glu135 is a catalytic residue. The DRBM domain occupies 173 to 242; sequence DFKTEFQEMV…ARQVLARFAA (70 aa).

Belongs to the ribonuclease III family. As to quaternary structure, homodimer. Requires Mg(2+) as cofactor.

It localises to the cytoplasm. The enzyme catalyses Endonucleolytic cleavage to 5'-phosphomonoester.. Functionally, digests double-stranded RNA. Involved in the processing of primary rRNA transcript to yield the immediate precursors to the large and small rRNAs (23S and 16S). Processes some mRNAs, and tRNAs when they are encoded in the rRNA operon. Processes pre-crRNA and tracrRNA of type II CRISPR loci if present in the organism. The polypeptide is Ribonuclease 3 (Geobacter metallireducens (strain ATCC 53774 / DSM 7210 / GS-15)).